Here is a 92-residue protein sequence, read N- to C-terminus: Small ribosomal subunit protein uS19 (92 aa).

Belongs to the universal ribosomal protein uS19 family.

In terms of biological role, protein S19 forms a complex with S13 that binds strongly to the 16S ribosomal RNA. The chain is Small ribosomal subunit protein uS19 from Leptospira biflexa serovar Patoc (strain Patoc 1 / Ames).